Consider the following 387-residue polypeptide: Natterin-4 (387 aa).

The N-terminal stretch at 1–18 (MKLLVLLVTLLVLSWTSA) is a signal peptide. Residues 19–46 (EDVGDQEILQQHNEDNNHKSELGEAAPQ) constitute a propeptide that is removed on maturation. Positions 31–40 (NEDNNHKSEL) are enriched in basic and acidic residues. A disordered region spans residues 31-57 (NEDNNHKSELGEAAPQRTDNETSQLGQ).

This sequence belongs to the natterin family. In terms of processing, contains 4 disulfide bonds. In terms of tissue distribution, expressed by the venom gland.

The protein localises to the secreted. Inhibited by tissue-kallikrein inhibitor TKI and trasylol. Plasma kallikrein inhibitor PKSI527 and classical inhibitors of serine-, metallo-, thiol- or aspartate-peptidases evokes a minor inhibition of the peptide digestion. Its function is as follows. Shows nociceptive, edema-inducing and kininogenase activity with release of kallidin from low molecular weight kininogen. The cleavage occurs at Met-Lys bonds. The sequence is that of Natterin-4 from Thalassophryne nattereri (Copper Joe toadfish).